A 396-amino-acid chain; its full sequence is Chalcone synthase (396 aa).

C169 is a catalytic residue.

This sequence belongs to the thiolase-like superfamily. Chalcone/stilbene synthases family.

The catalysed reaction is (E)-4-coumaroyl-CoA + 3 malonyl-CoA + 3 H(+) = 2',4,4',6'-tetrahydroxychalcone + 3 CO2 + 4 CoA. It participates in secondary metabolite biosynthesis; flavonoid biosynthesis. The primary product of this enzyme is 4,2',4',6'-tetrahydroxychalcone (also termed naringenin-chalcone or chalcone) which can under specific conditions spontaneously isomerize into naringenin. The chain is Chalcone synthase (CHS) from Pinus sylvestris (Scotch pine).